The sequence spans 71 residues: Small ribosomal subunit protein bS21 (71 aa).

The protein belongs to the bacterial ribosomal protein bS21 family.

This Wigglesworthia glossinidia brevipalpis protein is Small ribosomal subunit protein bS21.